A 62-amino-acid polypeptide reads, in one-letter code: DNA-directed RNA polymerase subunit Rpo10 (62 aa).

Zn(2+) is bound by residues C6, C9, C43, and C44.

It belongs to the archaeal Rpo10/eukaryotic RPB10 RNA polymerase subunit family. Part of the RNA polymerase complex. It depends on Zn(2+) as a cofactor.

The protein resides in the cytoplasm. The enzyme catalyses RNA(n) + a ribonucleoside 5'-triphosphate = RNA(n+1) + diphosphate. Functionally, DNA-dependent RNA polymerase (RNAP) catalyzes the transcription of DNA into RNA using the four ribonucleoside triphosphates as substrates. This Methanosarcina acetivorans (strain ATCC 35395 / DSM 2834 / JCM 12185 / C2A) protein is DNA-directed RNA polymerase subunit Rpo10.